Here is a 309-residue protein sequence, read N- to C-terminus: Sulfate adenylyltransferase subunit 2 (309 aa).

Belongs to the PAPS reductase family. CysD subfamily. Heterodimer composed of CysD, the smaller subunit, and CysN.

The catalysed reaction is sulfate + ATP + H(+) = adenosine 5'-phosphosulfate + diphosphate. Its pathway is sulfur metabolism; hydrogen sulfide biosynthesis; sulfite from sulfate: step 1/3. Functionally, with CysN forms the ATP sulfurylase (ATPS) that catalyzes the adenylation of sulfate producing adenosine 5'-phosphosulfate (APS) and diphosphate, the first enzymatic step in sulfur assimilation pathway. APS synthesis involves the formation of a high-energy phosphoric-sulfuric acid anhydride bond driven by GTP hydrolysis by CysN coupled to ATP hydrolysis by CysD. The polypeptide is Sulfate adenylyltransferase subunit 2 (Mycolicibacterium gilvum (strain PYR-GCK) (Mycobacterium gilvum (strain PYR-GCK))).